Here is a 119-residue protein sequence, read N- to C-terminus: Large ribosomal subunit protein bL20 (119 aa).

It belongs to the bacterial ribosomal protein bL20 family.

Its function is as follows. Binds directly to 23S ribosomal RNA and is necessary for the in vitro assembly process of the 50S ribosomal subunit. It is not involved in the protein synthesizing functions of that subunit. The polypeptide is Large ribosomal subunit protein bL20 (Bacillus velezensis (strain DSM 23117 / BGSC 10A6 / LMG 26770 / FZB42) (Bacillus amyloliquefaciens subsp. plantarum)).